Reading from the N-terminus, the 362-residue chain is Lipoprotein p35 (362 aa).

The signal sequence occupies residues 1–30; sequence MKIKKIKLLKALALTGAFGIVATVPVIVSS. Cys31 is lipidated: N-palmitoyl cysteine. Cys31 carries the S-diacylglycerol cysteine lipid modification. Residues 33-53 are disordered; it reads STSENNGNGNGNGGTDGNTQQ.

It belongs to the p35 lipoprotein family. In terms of processing, the N-terminus is blocked.

It is found in the cell membrane. Functionally, major M.penetrans antigen. In Malacoplasma penetrans (strain HF-2) (Mycoplasma penetrans), this protein is Lipoprotein p35.